The chain runs to 193 residues: Ion-translocating oxidoreductase complex subunit A (193 aa).

6 helical membrane passes run 5–25, 39–59, 62–82, 102–122, 134–154, and 171–191; these read LLLL…FLGL, MGMG…AWAV, FILV…LVIA, LLGI…VALL, AVYG…FAAI, and SIAL…SGLV.

This sequence belongs to the NqrDE/RnfAE family. The complex is composed of six subunits: RnfA, RnfB, RnfC, RnfD, RnfE and RnfG.

It is found in the cell inner membrane. Functionally, part of a membrane-bound complex that couples electron transfer with translocation of ions across the membrane. The protein is Ion-translocating oxidoreductase complex subunit A of Edwardsiella ictaluri (strain 93-146).